We begin with the raw amino-acid sequence, 62 residues long: Sperm protamine P1 (62 aa).

Residues methionine 1–tyrosine 62 are disordered.

Belongs to the protamine P1 family. Testis.

Its subcellular location is the nucleus. It is found in the chromosome. Protamines substitute for histones in the chromatin of sperm during the haploid phase of spermatogenesis. They compact sperm DNA into a highly condensed, stable and inactive complex. The sequence is that of Sperm protamine P1 (PRM1) from Thylogale stigmatica (Red-legged pademelon).